Consider the following 352-residue polypeptide: Pre-rRNA-processing protein ipi1 (352 aa).

This sequence belongs to the IPI1/TEX10 family. As to quaternary structure, component of the RIX1 complex, composed of rrm-9/ipi1, rix1/ipi2 and ipi3 in a 1:2:2 stoichiometry. The complex interacts (via rix1) with mdn1 (via its hexameric AAA ATPase ring) and the pre-60S ribosome particles.

The protein localises to the nucleus. Component of the RIX1 complex required for processing of ITS2 sequences from 35S pre-rRNA. The chain is Pre-rRNA-processing protein ipi1 (rrm-9) from Neurospora crassa (strain ATCC 24698 / 74-OR23-1A / CBS 708.71 / DSM 1257 / FGSC 987).